Here is a 302-residue protein sequence, read N- to C-terminus: Aspartate carbamoyltransferase catalytic subunit (302 aa).

Carbamoyl phosphate contacts are provided by Arg54 and Thr55. Lys82 contributes to the L-aspartate binding site. Arg104, His132, and Gln135 together coordinate carbamoyl phosphate. L-aspartate is bound by residues Arg165 and Arg217. Carbamoyl phosphate is bound by residues Gly257 and Pro258.

Belongs to the aspartate/ornithine carbamoyltransferase superfamily. ATCase family. Heterododecamer (2C3:3R2) of six catalytic PyrB chains organized as two trimers (C3), and six regulatory PyrI chains organized as three dimers (R2).

The catalysed reaction is carbamoyl phosphate + L-aspartate = N-carbamoyl-L-aspartate + phosphate + H(+). The protein operates within pyrimidine metabolism; UMP biosynthesis via de novo pathway; (S)-dihydroorotate from bicarbonate: step 2/3. Its function is as follows. Catalyzes the condensation of carbamoyl phosphate and aspartate to form carbamoyl aspartate and inorganic phosphate, the committed step in the de novo pyrimidine nucleotide biosynthesis pathway. The polypeptide is Aspartate carbamoyltransferase catalytic subunit (Thermus thermophilus (strain ATCC BAA-163 / DSM 7039 / HB27)).